The sequence spans 543 residues: Chaperonin GroEL (543 aa).

Residues 29-32, Lys50, 86-90, Gly413, 480-482, and Asp496 contribute to the ATP site; these read TLGP, DGTTT, and NAA. The tract at residues 524–543 is disordered; the sequence is EKPEKKESTPASAGAGDMDF.

Belongs to the chaperonin (HSP60) family. Forms a cylinder of 14 subunits composed of two heptameric rings stacked back-to-back. Interacts with the co-chaperonin GroES.

The protein resides in the cytoplasm. The enzyme catalyses ATP + H2O + a folded polypeptide = ADP + phosphate + an unfolded polypeptide.. In terms of biological role, together with its co-chaperonin GroES, plays an essential role in assisting protein folding. The GroEL-GroES system forms a nano-cage that allows encapsulation of the non-native substrate proteins and provides a physical environment optimized to promote and accelerate protein folding. This Thermus thermophilus (strain ATCC BAA-163 / DSM 7039 / HB27) protein is Chaperonin GroEL.